The primary structure comprises 576 residues: K(+)/H(+) antiporter NhaP2 (576 aa).

A run of 13 helical transmembrane segments spans residues 6 to 26 (INSF…LSPM), 34 to 54 (ILLI…GGIL), 58 to 78 (YSTA…DGGM), 87 to 107 (VALW…TSIT), 109 to 129 (MMAA…GAIV), 163 to 183 (PMAV…DTEM), 185 to 205 (FSFM…LGLG), 219 to 239 (LADG…YAAS), 242 to 262 (LGGS…NKPT), 271 to 291 (VLDG…GLLL), 299 to 319 (ILIP…PVAV), 335 to 355 (WFIS…VFPM), and 359 to 379 (LPGA…SLLV). Residues 405 to 486 (SGVEIYPSSE…LEALSNLFSQ (82 aa)) form the RCK C-terminal domain.

This sequence belongs to the monovalent cation:proton antiporter 1 (CPA1) transporter (TC 2.A.36) family. NhaP2 subfamily.

It localises to the cell inner membrane. It carries out the reaction K(+)(in) + H(+)(out) = K(+)(out) + H(+)(in). In terms of biological role, k(+)/H(+) antiporter that extrudes potassium in exchange for external protons and maintains the internal concentration of potassium under toxic levels. The sequence is that of K(+)/H(+) antiporter NhaP2 from Shewanella baltica (strain OS195).